The sequence spans 137 residues: MLQPKRTKYRKQFKGRIKGVAKGGSDLAFGEFGLKAQEPNRVNAREIEAARRAITRYMKRAGRVWIRVFPDVPVTAKPTEVRMGKGKGSVEYWACKVKPGRMMFEIDGVSEEIAREALRLGSAKLSVKTRFVQRIAE.

Belongs to the universal ribosomal protein uL16 family. As to quaternary structure, part of the 50S ribosomal subunit.

In terms of biological role, binds 23S rRNA and is also seen to make contacts with the A and possibly P site tRNAs. The chain is Large ribosomal subunit protein uL16 from Rhizobium etli (strain CIAT 652).